We begin with the raw amino-acid sequence, 315 residues long: Lamassu protein LmuA (315 aa).

In terms of biological role, component of antiviral defense system Lamassu type I, composed of LmuA and LmuB. Expression of Lamassu type I in B.subtilis (strain BEST7003) confers resistance to phages phi3T, SpBeta and SPR. In Bacillus sp. (strain NCIM 5461 / CCTCC AB 2011126 / NIO-1130), this protein is Lamassu protein LmuA.